The following is a 218-amino-acid chain: Large ribosomal subunit protein bL25 (218 aa).

Belongs to the bacterial ribosomal protein bL25 family. CTC subfamily. Part of the 50S ribosomal subunit; part of the 5S rRNA/L5/L18/L25 subcomplex. Contacts the 5S rRNA. Binds to the 5S rRNA independently of L5 and L18.

Its function is as follows. This is one of the proteins that binds to the 5S RNA in the ribosome where it forms part of the central protuberance. The polypeptide is Large ribosomal subunit protein bL25 (Polaromonas naphthalenivorans (strain CJ2)).